We begin with the raw amino-acid sequence, 632 residues long: Cyclic GMP-AMP synthase-like receptor 2 (632 aa).

Residues aspartate 71, aspartate 73, and aspartate 181 each coordinate Mg(2+). Aspartate 295 lines the Mn(2+) pocket.

This sequence belongs to the mab-21 family. Requires Mg(2+) as cofactor. Mn(2+) is required as a cofactor.

Nucleotidyltransferase that catalyzes the formation of some cyclic nucleotide and plays a key role in innate immunity. Directly binds some unknown ligand, activating the nucleotidyltransferase activity, leading to synthesis of a second messenger that binds to and activates Sting, thereby triggering the immune response via activation of the NF-kappa-B transcription factor. In Crassostrea virginica (Eastern oyster), this protein is Cyclic GMP-AMP synthase-like receptor 2.